The primary structure comprises 121 residues: Small ribosomal subunit protein uS13 (121 aa).

Residues 88–121 are disordered; it reads GMRHRRGLPVRGQHTKNNARTRKGKAVAIANKKK.

It belongs to the universal ribosomal protein uS13 family. Part of the 30S ribosomal subunit. Forms a loose heterodimer with protein S19. Forms two bridges to the 50S subunit in the 70S ribosome.

Functionally, located at the top of the head of the 30S subunit, it contacts several helices of the 16S rRNA. In the 70S ribosome it contacts the 23S rRNA (bridge B1a) and protein L5 of the 50S subunit (bridge B1b), connecting the 2 subunits; these bridges are implicated in subunit movement. Contacts the tRNAs in the A and P-sites. The polypeptide is Small ribosomal subunit protein uS13 (Limosilactobacillus reuteri subsp. reuteri (strain JCM 1112) (Lactobacillus reuteri)).